The sequence spans 174 residues: Putative NADH dehydrogenase/NAD(P)H nitroreductase AF_2267 (174 aa).

Residue 107-112 (AARCLG) coordinates NAD(+).

It belongs to the nitroreductase family. Requires FMN as cofactor.

The protein is Putative NADH dehydrogenase/NAD(P)H nitroreductase AF_2267 of Archaeoglobus fulgidus (strain ATCC 49558 / DSM 4304 / JCM 9628 / NBRC 100126 / VC-16).